Consider the following 349-residue polypeptide: Ribosomal RNA small subunit methyltransferase H (349 aa).

S-adenosyl-L-methionine-binding positions include Gly-34–His-36, Asp-54, Phe-81, Asp-102, and Gln-109. Residues Ser-328–Ser-349 are disordered.

This sequence belongs to the methyltransferase superfamily. RsmH family.

The protein resides in the cytoplasm. It carries out the reaction cytidine(1402) in 16S rRNA + S-adenosyl-L-methionine = N(4)-methylcytidine(1402) in 16S rRNA + S-adenosyl-L-homocysteine + H(+). Its function is as follows. Specifically methylates the N4 position of cytidine in position 1402 (C1402) of 16S rRNA. In Dehalococcoides mccartyi (strain ATCC BAA-2100 / JCM 16839 / KCTC 5957 / BAV1), this protein is Ribosomal RNA small subunit methyltransferase H.